Here is a 390-residue protein sequence, read N- to C-terminus: Putative glutamate--cysteine ligase 2 (390 aa).

This sequence belongs to the glutamate--cysteine ligase type 2 family. YbdK subfamily.

The catalysed reaction is L-cysteine + L-glutamate + ATP = gamma-L-glutamyl-L-cysteine + ADP + phosphate + H(+). Its function is as follows. ATP-dependent carboxylate-amine ligase which exhibits weak glutamate--cysteine ligase activity. The sequence is that of Putative glutamate--cysteine ligase 2 from Chloroflexus aurantiacus (strain ATCC 29366 / DSM 635 / J-10-fl).